The sequence spans 83 residues: MAGETNEDVKAMSFEQALDALEKIVDDLERGDVPLDQSIRIYERGEALKAHCDRLLKAAEDKVEKIRLSRDGKPVGTEPLDAD.

The protein belongs to the XseB family. As to quaternary structure, heterooligomer composed of large and small subunits.

Its subcellular location is the cytoplasm. It carries out the reaction Exonucleolytic cleavage in either 5'- to 3'- or 3'- to 5'-direction to yield nucleoside 5'-phosphates.. Bidirectionally degrades single-stranded DNA into large acid-insoluble oligonucleotides, which are then degraded further into small acid-soluble oligonucleotides. This Mesorhizobium japonicum (strain LMG 29417 / CECT 9101 / MAFF 303099) (Mesorhizobium loti (strain MAFF 303099)) protein is Exodeoxyribonuclease 7 small subunit.